A 329-amino-acid polypeptide reads, in one-letter code: Phenylalanine--tRNA ligase alpha subunit (329 aa).

Position 254 (Glu254) interacts with Mg(2+).

The protein belongs to the class-II aminoacyl-tRNA synthetase family. Phe-tRNA synthetase alpha subunit type 1 subfamily. Tetramer of two alpha and two beta subunits. Mg(2+) serves as cofactor.

The protein localises to the cytoplasm. It carries out the reaction tRNA(Phe) + L-phenylalanine + ATP = L-phenylalanyl-tRNA(Phe) + AMP + diphosphate + H(+). The protein is Phenylalanine--tRNA ligase alpha subunit of Mannheimia succiniciproducens (strain KCTC 0769BP / MBEL55E).